Reading from the N-terminus, the 405-residue chain is Acetate kinase (405 aa).

Mg(2+) is bound at residue Asn-13. ATP is bound at residue Lys-20. Residue Arg-94 participates in substrate binding. Asp-153 functions as the Proton donor/acceptor in the catalytic mechanism. ATP is bound by residues 213–217, 288–290, and 336–340; these read HLGNG, DFR, and GIGEN. Mg(2+) is bound at residue Glu-390.

The protein belongs to the acetokinase family. Homodimer. Mg(2+) serves as cofactor. The cofactor is Mn(2+).

It localises to the cytoplasm. The catalysed reaction is acetate + ATP = acetyl phosphate + ADP. The protein operates within metabolic intermediate biosynthesis; acetyl-CoA biosynthesis; acetyl-CoA from acetate: step 1/2. In terms of biological role, catalyzes the formation of acetyl phosphate from acetate and ATP. Can also catalyze the reverse reaction. This Buchnera aphidicola subsp. Acyrthosiphon pisum (strain APS) (Acyrthosiphon pisum symbiotic bacterium) protein is Acetate kinase.